The primary structure comprises 229 residues: Acetylornithine aminotransferase (229 aa).

Residues 95-96 (GA) and phenylalanine 122 contribute to the pyridoxal 5'-phosphate site. Residue arginine 125 participates in N(2)-acetyl-L-ornithine binding. Residue 208-211 (DEIQ) participates in pyridoxal 5'-phosphate binding.

It belongs to the class-III pyridoxal-phosphate-dependent aminotransferase family. ArgD subfamily. Homodimer. Pyridoxal 5'-phosphate is required as a cofactor.

It localises to the cytoplasm. The enzyme catalyses N(2)-acetyl-L-ornithine + 2-oxoglutarate = N-acetyl-L-glutamate 5-semialdehyde + L-glutamate. It participates in amino-acid biosynthesis; L-arginine biosynthesis; N(2)-acetyl-L-ornithine from L-glutamate: step 4/4. The chain is Acetylornithine aminotransferase (argD) from Bacillus amyloliquefaciens (Bacillus velezensis).